A 353-amino-acid polypeptide reads, in one-letter code: Photosystem II protein D1 (353 aa).

Threonine 2 is modified (N-acetylthreonine). Residue threonine 2 is modified to Phosphothreonine. The next 3 membrane-spanning stretches (helical) occupy residues 29 to 46 (YIGW…TATS), 118 to 133 (HFLL…EWEL), and 142 to 156 (WIAV…AATA). Position 118 (histidine 118) interacts with chlorophyll a. Tyrosine 126 serves as a coordination point for pheophytin a. [CaMn4O5] cluster is bound by residues aspartate 170 and glutamate 189. Residues 197–218 (FHMLGVAGVFGGSLFSAMHGSL) form a helical membrane-spanning segment. Histidine 198 provides a ligand contact to chlorophyll a. Histidine 215 serves as a coordination point for a quinone. Fe cation contacts are provided by histidine 215 and histidine 272. Residues 274–288 (FLAAWPVVGIWFTAL) traverse the membrane as a helical segment. Residues histidine 332, glutamate 333, aspartate 342, and alanine 344 each contribute to the [CaMn4O5] cluster site. Residues 345-353 (AVEAPSING) constitute a propeptide that is removed on maturation.

This sequence belongs to the reaction center PufL/M/PsbA/D family. In terms of assembly, PSII is composed of 1 copy each of membrane proteins PsbA, PsbB, PsbC, PsbD, PsbE, PsbF, PsbH, PsbI, PsbJ, PsbK, PsbL, PsbM, PsbT, PsbX, PsbY, PsbZ, Psb30/Ycf12, at least 3 peripheral proteins of the oxygen-evolving complex and a large number of cofactors. It forms dimeric complexes. Requires The D1/D2 heterodimer binds P680, chlorophylls that are the primary electron donor of PSII, and subsequent electron acceptors. It shares a non-heme iron and each subunit binds pheophytin, quinone, additional chlorophylls, carotenoids and lipids. D1 provides most of the ligands for the Mn4-Ca-O5 cluster of the oxygen-evolving complex (OEC). There is also a Cl(-1) ion associated with D1 and D2, which is required for oxygen evolution. The PSII complex binds additional chlorophylls, carotenoids and specific lipids. as cofactor. Post-translationally, tyr-161 forms a radical intermediate that is referred to as redox-active TyrZ, YZ or Y-Z. C-terminally processed by CTPA; processing is essential to allow assembly of the oxygen-evolving complex and thus photosynthetic growth.

The protein localises to the plastid. The protein resides in the chloroplast thylakoid membrane. The catalysed reaction is 2 a plastoquinone + 4 hnu + 2 H2O = 2 a plastoquinol + O2. Photosystem II (PSII) is a light-driven water:plastoquinone oxidoreductase that uses light energy to abstract electrons from H(2)O, generating O(2) and a proton gradient subsequently used for ATP formation. It consists of a core antenna complex that captures photons, and an electron transfer chain that converts photonic excitation into a charge separation. The D1/D2 (PsbA/PsbD) reaction center heterodimer binds P680, the primary electron donor of PSII as well as several subsequent electron acceptors. In Brassica napus (Rape), this protein is Photosystem II protein D1.